The chain runs to 134 residues: uncharacterized protein (134 aa).

This is an uncharacterized protein from Ictaluridae (bullhead catfishes).